Here is a 425-residue protein sequence, read N- to C-terminus: Histidine--tRNA ligase (425 aa).

Belongs to the class-II aminoacyl-tRNA synthetase family. As to quaternary structure, homodimer.

Its subcellular location is the cytoplasm. It catalyses the reaction tRNA(His) + L-histidine + ATP = L-histidyl-tRNA(His) + AMP + diphosphate + H(+). The protein is Histidine--tRNA ligase of Pelotomaculum thermopropionicum (strain DSM 13744 / JCM 10971 / SI).